We begin with the raw amino-acid sequence, 682 residues long: Potassium-transporting ATPase ATP-binding subunit (682 aa).

4 consecutive transmembrane segments (helical) span residues 34 to 54 (PVMFIVWIGSLLTTCISIAMA), 62 to 82 (ALFSAAISGWLWITVLFANFA), 219 to 239 (IALTILLIALTIVFLLATATL), and 254 to 274 (VLVALLVCLIPTTIGGLLSAI). The 4-aspartylphosphate intermediate role is filled by Asp307. ATP contacts are provided by residues Asp344, Glu348, 377-384 (FTAQSRMS), and Lys395. 2 residues coordinate Mg(2+): Asp518 and Asp522. The next 3 membrane-spanning stretches (helical) occupy residues 588–608 (FAIIPAAFAATYPQLNALNIM), 616–636 (AILSAVIFNALIIVFLIPLAL), and 656–676 (IYGLGGLLVPFIGIKVIDLLL).

The protein belongs to the cation transport ATPase (P-type) (TC 3.A.3) family. Type IA subfamily. In terms of assembly, the system is composed of three essential subunits: KdpA, KdpB and KdpC.

The protein localises to the cell inner membrane. The enzyme catalyses K(+)(out) + ATP + H2O = K(+)(in) + ADP + phosphate + H(+). In terms of biological role, part of the high-affinity ATP-driven potassium transport (or Kdp) system, which catalyzes the hydrolysis of ATP coupled with the electrogenic transport of potassium into the cytoplasm. This subunit is responsible for energy coupling to the transport system and for the release of the potassium ions to the cytoplasm. In Escherichia coli (strain ATCC 8739 / DSM 1576 / NBRC 3972 / NCIMB 8545 / WDCM 00012 / Crooks), this protein is Potassium-transporting ATPase ATP-binding subunit.